The chain runs to 485 residues: NADH-quinone oxidoreductase subunit N (485 aa).

The next 14 helical transmembrane spans lie at 8–28 (LIAL…MLSI), 35–55 (FVNA…LYFV), 75–95 (FYTG…YPWL), 105–125 (FYLL…ASHL), 127–147 (SLFI…GYAF), 159–179 (YTIL…LVYA), 203–223 (LLAG…LVPF), 235–255 (PAPV…GVLM), 271–291 (TVLG…AISQ), 297–317 (LLGY…IAVQ), 326–346 (VGVY…VVSL), 373–393 (AAVM…LGFI), 408–427 (WWLT…YYLR), and 449–469 (AFTA…VLGI).

It belongs to the complex I subunit 2 family. As to quaternary structure, NDH-1 is composed of 13 different subunits. Subunits NuoA, H, J, K, L, M, N constitute the membrane sector of the complex.

Its subcellular location is the cell inner membrane. It catalyses the reaction a quinone + NADH + 5 H(+)(in) = a quinol + NAD(+) + 4 H(+)(out). In terms of biological role, NDH-1 shuttles electrons from NADH, via FMN and iron-sulfur (Fe-S) centers, to quinones in the respiratory chain. The immediate electron acceptor for the enzyme in this species is believed to be ubiquinone. Couples the redox reaction to proton translocation (for every two electrons transferred, four hydrogen ions are translocated across the cytoplasmic membrane), and thus conserves the redox energy in a proton gradient. This Erwinia tasmaniensis (strain DSM 17950 / CFBP 7177 / CIP 109463 / NCPPB 4357 / Et1/99) protein is NADH-quinone oxidoreductase subunit N.